We begin with the raw amino-acid sequence, 475 residues long: 3-keto-steroid reductase ERG27 (475 aa).

4 residues coordinate NADP(+): Ile-32, Ile-55, Thr-59, and Lys-65. Catalysis depends on proton donor residues Ser-249 and Tyr-272. Tyr-272, Lys-276, Val-324, and Ser-326 together coordinate NADP(+). The active-site Lowers pKa of active site Tyr is the Lys-276.

This sequence belongs to the short-chain dehydrogenases/reductases (SDR) family. ERG27 subfamily. As to quaternary structure, heterotetramer of ERG25, ERG26, ERG27 and ERG28. ERG28 acts as a scaffold to tether ERG27 and other 4,4-demethylation-related enzymes, forming a demethylation enzyme complex, in the endoplasmic reticulum.

Its subcellular location is the endoplasmic reticulum membrane. It localises to the lipid droplet. Its pathway is steroid metabolism; ergosterol biosynthesis. Its function is as follows. 3-keto-steroid reductase; part of the third module of ergosterol biosynthesis pathway that includes the late steps of the pathway. ERG27 is a catalytic component of the C-4 demethylation complex that catalyzes the conversion of 4,4-dimethylfecosterol into fecosterol via 4-methylfecosterol. The third module or late pathway involves the ergosterol synthesis itself through consecutive reactions that mainly occur in the endoplasmic reticulum (ER) membrane. Firstly, the squalene synthase ERG9 catalyzes the condensation of 2 farnesyl pyrophosphate moieties to form squalene, which is the precursor of all steroids. Squalene synthase is crucial for balancing the incorporation of farnesyl diphosphate (FPP) into sterol and nonsterol isoprene synthesis. Secondly, squalene is converted into lanosterol by the consecutive action of the squalene epoxidase ERG1 and the lanosterol synthase ERG7. Then, the delta(24)-sterol C-methyltransferase ERG6 methylates lanosterol at C-24 to produce eburicol. Eburicol is the substrate of the sterol 14-alpha demethylase encoded by CYP51A, CYP51B and CYP51C, to yield 4,4,24-trimethyl ergosta-8,14,24(28)-trienol. CYP51B encodes the enzyme primarily responsible for sterol 14-alpha-demethylation, and plays an essential role in ascospore formation. CYP51A encodes an additional sterol 14-alpha-demethylase, induced on ergosterol depletion and responsible for the intrinsic variation in azole sensitivity. The third CYP51 isoform, CYP51C, does not encode a sterol 14-alpha-demethylase, but is required for full virulence on host wheat ears. The C-14 reductase ERG24 then reduces the C14=C15 double bond which leads to 4,4-dimethylfecosterol. A sequence of further demethylations at C-4, involving the C-4 demethylation complex containing the C-4 methylsterol oxidases ERG25, the sterol-4-alpha-carboxylate 3-dehydrogenase ERG26 and the 3-keto-steroid reductase ERG27, leads to the production of fecosterol via 4-methylfecosterol. ERG28 has a role as a scaffold to help anchor ERG25, ERG26 and ERG27 to the endoplasmic reticulum. The C-8 sterol isomerase ERG2 then catalyzes the reaction which results in unsaturation at C-7 in the B ring of sterols and thus converts fecosterol to episterol. The sterol-C5-desaturases ERG3A and ERG3BB then catalyze the introduction of a C-5 double bond in the B ring to produce 5-dehydroepisterol. The C-22 sterol desaturases ERG5A and ERG5B further convert 5-dehydroepisterol into ergosta-5,7,22,24(28)-tetraen-3beta-ol by forming the C-22(23) double bond in the sterol side chain. Finally, ergosta-5,7,22,24(28)-tetraen-3beta-ol is substrate of the C-24(28) sterol reductase ERG4 to produce ergosterol. The chain is 3-keto-steroid reductase ERG27 from Gibberella zeae (strain ATCC MYA-4620 / CBS 123657 / FGSC 9075 / NRRL 31084 / PH-1) (Wheat head blight fungus).